A 92-amino-acid chain; its full sequence is Small ribosomal subunit protein uS19 (92 aa).

Belongs to the universal ribosomal protein uS19 family.

In terms of biological role, protein S19 forms a complex with S13 that binds strongly to the 16S ribosomal RNA. This chain is Small ribosomal subunit protein uS19, found in Prochlorococcus marinus (strain MIT 9215).